Consider the following 76-residue polypeptide: Vasotab-TY1 (76 aa).

The N-terminal stretch at 1–21 (MKFTLFSVLVVLLIATFVAAD) is a signal peptide. The Kazal-like domain occupies 22–76 (DCPRICTADFRPVCGTPSGGRRSANRTFGNQCSLDSHNCLNKGDTYDKLHDGECK). Intrachain disulfides connect cysteine 23–cysteine 60, cysteine 27–cysteine 53, and cysteine 35–cysteine 75.

Expressed by the salivary gland.

It localises to the secreted. Vasodilator protein that inhibits vasoconstriction of isolated rat femoral artery induced by phenylephrine. Since platelet aggregation and vasoconstriction are key hemostatic responses, particularly in small wounds, this protein likely participates in the antihemostatic responses during blood feeding. Blocks L-type calcium channels (Cav1/CACNA1) in left ventricular myocytes isolated from rat hearts. The sequence is that of Vasotab-TY1 from Tabanus yao (Horsefly).